The following is a 205-amino-acid chain: Glycerol-3-phosphate acyltransferase (205 aa).

5 helical membrane passes run 6-26 (STVLFAIGAYLIGSISFAVVV), 55-75 (KAAILTLLGDGAKGFVAVWLV), 89-109 (VALVAIAVFLGHLWPIFFRFV), 120-140 (ILLALNGWLGLATLITWLVIA), and 162-182 (ALMFGPDAILLAVVAMSVLLI).

The protein belongs to the PlsY family. As to quaternary structure, probably interacts with PlsX.

The protein resides in the cell inner membrane. The catalysed reaction is an acyl phosphate + sn-glycerol 3-phosphate = a 1-acyl-sn-glycero-3-phosphate + phosphate. Its pathway is lipid metabolism; phospholipid metabolism. Its function is as follows. Catalyzes the transfer of an acyl group from acyl-phosphate (acyl-PO(4)) to glycerol-3-phosphate (G3P) to form lysophosphatidic acid (LPA). This enzyme utilizes acyl-phosphate as fatty acyl donor, but not acyl-CoA or acyl-ACP. The chain is Glycerol-3-phosphate acyltransferase from Herminiimonas arsenicoxydans.